We begin with the raw amino-acid sequence, 455 residues long: UDP-N-acetylmuramoyl-tripeptide--D-alanyl-D-alanine ligase (455 aa).

Residue 107–113 (GSCGKTS) coordinates ATP.

This sequence belongs to the MurCDEF family. MurF subfamily.

The protein resides in the cytoplasm. It carries out the reaction D-alanyl-D-alanine + UDP-N-acetyl-alpha-D-muramoyl-L-alanyl-gamma-D-glutamyl-meso-2,6-diaminopimelate + ATP = UDP-N-acetyl-alpha-D-muramoyl-L-alanyl-gamma-D-glutamyl-meso-2,6-diaminopimeloyl-D-alanyl-D-alanine + ADP + phosphate + H(+). It functions in the pathway cell wall biogenesis; peptidoglycan biosynthesis. Its function is as follows. Involved in cell wall formation. Catalyzes the final step in the synthesis of UDP-N-acetylmuramoyl-pentapeptide, the precursor of murein. This Buchnera aphidicola subsp. Acyrthosiphon pisum (strain APS) (Acyrthosiphon pisum symbiotic bacterium) protein is UDP-N-acetylmuramoyl-tripeptide--D-alanyl-D-alanine ligase.